The sequence spans 280 residues: uncharacterized protein (280 aa).

Positions 1–21 (MRPVIKVGLSTASVYPLRAEA) are cleaved as a signal peptide.

This sequence to M.tuberculosis Rv0498 and S.coelicolor SCO3347.

This is an uncharacterized protein from Mycobacterium leprae (strain TN).